We begin with the raw amino-acid sequence, 365 residues long: tRNA(Met) cytidine acetate ligase (365 aa).

Residues 7 to 20, Gly96, Asn152, and Arg175 each bind ATP; that span reads IAEFNPFHNGHKYL.

Belongs to the TmcAL family.

It localises to the cytoplasm. The enzyme catalyses cytidine(34) in elongator tRNA(Met) + acetate + ATP = N(4)-acetylcytidine(34) in elongator tRNA(Met) + AMP + diphosphate. In terms of biological role, catalyzes the formation of N(4)-acetylcytidine (ac(4)C) at the wobble position of elongator tRNA(Met), using acetate and ATP as substrates. First activates an acetate ion to form acetyladenylate (Ac-AMP) and then transfers the acetyl group to tRNA to form ac(4)C34. The chain is tRNA(Met) cytidine acetate ligase from Streptococcus pneumoniae (strain Taiwan19F-14).